A 391-amino-acid polypeptide reads, in one-letter code: MTNQPTEIAIVGGGMVGGALALGLAQHGFAVTVIEHAEPAPFVADSQPDVRISAISAASVSLLKGLGVWDAVQAMRCHPYRRLETWEWETAHVVFDAAELKLPLLGYMVENTVLQQALWQALEAHPKVTLRVPGSLIALHRHDDLQELELKGGEVIRAKLVIGADGANSQVRQMAGIGVHAWQYAQSCMLISVQCENDPGDSTWQQFTPDGPRAFLPLFDNWASLVWYDSPARIRQLQNMNMAQLQAEIAKHFPSRLGYVTPLAAGAFPLTRRHALQYVQPGLALVGDAAHTIHPLAGQGVNLGYRDVDALIDVLVNARSYGEAWASYPVLKRYQMRRMADNFIMQSGMDLFYAGFSNNLPPLRFMRNLGLMAAERAGVLKRQALKYALGL.

This sequence belongs to the UbiH/COQ6 family. As to quaternary structure, component of the Ubi complex metabolon, which regroups five ubiquinone biosynthesis proteins (UbiE, UbiF, UbiG, UbiH and UbiI) and two accessory factors (UbiK and the lipid-binding protein UbiJ). The cofactor is FAD.

The protein localises to the cytoplasm. It catalyses the reaction a 5-methoxy-2-methyl-3-(all-trans-polyprenyl)benzene-1,4-diol + AH2 + O2 = a 3-demethylubiquinol + A + H2O. The protein operates within cofactor biosynthesis; ubiquinone biosynthesis. In terms of biological role, catalyzes the hydroxylation of 2-octaprenyl-3-methyl-6-methoxy-1,4-benzoquinol during ubiquinone biosynthesis. This is 3-demethoxyubiquinol 3-hydroxylase (ubiF) from Escherichia coli (strain K12).